A 124-amino-acid polypeptide reads, in one-letter code: Large ribosomal subunit protein bL20 (124 aa).

It belongs to the bacterial ribosomal protein bL20 family.

Its function is as follows. Binds directly to 23S ribosomal RNA and is necessary for the in vitro assembly process of the 50S ribosomal subunit. It is not involved in the protein synthesizing functions of that subunit. This Ehrlichia chaffeensis (strain ATCC CRL-10679 / Arkansas) protein is Large ribosomal subunit protein bL20.